We begin with the raw amino-acid sequence, 346 residues long: Small glutamine-rich tetratricopeptide repeat-containing protein 2 (346 aa).

4 TPR repeats span residues 102–135 (AEDL…LPTN), 136–169 (AIYY…DPSY), 170–203 (FRGY…EGDN), and 205–229 (TEAM…EKTV). A disordered region spans residues 219 to 249 (VEQSLNLEKTVPEQSRDADVDASQGASAGGL). Residues 228-237 (TVPEQSRDAD) show a composition bias toward basic and acidic residues. Threonine 308 bears the Phosphothreonine mark. The segment at 325–346 (GNLFGGAGAQSTDETPDNENKQ) is disordered.

This sequence belongs to the SGT family. Interacts with HSC82, HSP104, MDY2, SSA1 and SSA2.

The protein resides in the cytoplasm. In terms of biological role, co-chaperone that binds to the molecular chaperone Hsp70 (SSA1 and SSA2). Regulates Hsp70 ATPase activity. Required for recovery from heat shock. The polypeptide is Small glutamine-rich tetratricopeptide repeat-containing protein 2 (SGT2) (Saccharomyces cerevisiae (strain ATCC 204508 / S288c) (Baker's yeast)).